The chain runs to 528 residues: Peptide chain release factor 3 (528 aa).

The tr-type G domain occupies 10 to 278 (DRRRTFGIIS…AFVQMAPPPH (269 aa)). GTP is bound by residues 19–26 (SHPDAGKT), 87–91 (DTPGH), and 141–144 (NKLD).

The protein belongs to the TRAFAC class translation factor GTPase superfamily. Classic translation factor GTPase family. PrfC subfamily.

It is found in the cytoplasm. Increases the formation of ribosomal termination complexes and stimulates activities of RF-1 and RF-2. It binds guanine nucleotides and has strong preference for UGA stop codons. It may interact directly with the ribosome. The stimulation of RF-1 and RF-2 is significantly reduced by GTP and GDP, but not by GMP. The polypeptide is Peptide chain release factor 3 (Syntrophobacter fumaroxidans (strain DSM 10017 / MPOB)).